A 555-amino-acid polypeptide reads, in one-letter code: Formate--tetrahydrofolate ligase (555 aa).

65–72 provides a ligand contact to ATP; that stretch reads TPAGEGKT.

This sequence belongs to the formate--tetrahydrofolate ligase family.

It catalyses the reaction (6S)-5,6,7,8-tetrahydrofolate + formate + ATP = (6R)-10-formyltetrahydrofolate + ADP + phosphate. It participates in one-carbon metabolism; tetrahydrofolate interconversion. The chain is Formate--tetrahydrofolate ligase from Thermoanaerobacter sp. (strain X514).